A 402-amino-acid polypeptide reads, in one-letter code: Flavohemoprotein (402 aa).

Residues 1 to 136 (MLSEKTIEIV…IADAFISIEA (136 aa)) form the Globin domain. Residue His-85 participates in heme b binding. Active-site charge relay system residues include Tyr-95 and Glu-135. The reductase stretch occupies residues 147–402 (GGWKDFRNFV…EFFGPAASLQ (256 aa)). Residues 150 to 260 (KDFRNFVVVK…SAPAGDFVLN (111 aa)) enclose the FAD-binding FR-type domain. FAD-binding positions include Tyr-188 and 204–207 (RQYS). 273 to 278 (GVGITP) is an NADP(+) binding site. FAD is bound at residue 394-397 (FFGP).

It belongs to the globin family. Two-domain flavohemoproteins subfamily. The protein in the C-terminal section; belongs to the flavoprotein pyridine nucleotide cytochrome reductase family. Heme b is required as a cofactor. It depends on FAD as a cofactor.

The catalysed reaction is 2 nitric oxide + NADPH + 2 O2 = 2 nitrate + NADP(+) + H(+). It catalyses the reaction 2 nitric oxide + NADH + 2 O2 = 2 nitrate + NAD(+) + H(+). Functionally, is involved in NO detoxification in an aerobic process, termed nitric oxide dioxygenase (NOD) reaction that utilizes O(2) and NAD(P)H to convert NO to nitrate, which protects the bacterium from various noxious nitrogen compounds. Therefore, plays a central role in the inducible response to nitrosative stress. In Bacillus anthracis, this protein is Flavohemoprotein.